Here is a 937-residue protein sequence, read N- to C-terminus: Diacylglycerol kinase theta (937 aa).

A disordered region spans residues 1–48; sequence MATAAESGARTWPGSGSPRLGSPAGSPVLGISGRARPGSGPERTGRAI. Ser-22 and Ser-26 each carry phosphoserine. 3 consecutive Phorbol-ester/DAG-type zinc fingers follow at residues 54-102, 115-162, and 177-228; these read GHSF…KTPC, AHCF…CSDC, and HHHW…TPEC. A disordered region spans residues 359–378; that stretch reads GKAGTTEEETSKDSGPGDSV. The region spanning 390 to 489 is the Ras-associating domain; sequence TQEILKIYPD…TRFYVAEARA (100 aa). Short sequence motifs (LXXLL motif) lie at residues 550-554 and 569-573; these read LYMLA and LPDVL. The region spanning 579 to 716 is the DAGKc domain; sequence PDCCPLLVFV…MDRWTILLDA (138 aa). Residues 911-937 form a disordered region; that stretch reads AKQKPRKAGAIRDTRVDTLPAPEGNPL.

This sequence belongs to the eukaryotic diacylglycerol kinase family. In terms of assembly, interacts with RHOA (constitutively activated, GTP-bound); the interaction inhibits DGKQ. Interacts with PRKCE. Interacts with PRKCH. Interacts with PLCB1. Interacts with NR5A1; the interaction requires both LXXLL motifs in DGKQ and is required for full phosphatidic acid-mediated activation of NR5A1. In terms of processing, phosphorylated by PRKCE and PRKCH in vitro. As to expression, widely expressed with higher expression in the brain and, to a lesser extent, in the small intestine, duodenum, and liver. In brain, expressed in gray matter. Expression is most intense in the cerebellar cortex and hippocampus, while moderate expression is seen in the olfactory bulb neuronal layers and brain stem nuclei. In the cerebellar cortex, equally expressed in both the Purkinje cell somata and the granule cells.

It is found in the cytoplasm. The protein localises to the cytosol. The protein resides in the cell membrane. It localises to the synapse. Its subcellular location is the cytoskeleton. It is found in the nucleus. The protein localises to the nucleus speckle. The protein resides in the nucleus matrix. It catalyses the reaction a 1,2-diacyl-sn-glycerol + ATP = a 1,2-diacyl-sn-glycero-3-phosphate + ADP + H(+). The enzyme catalyses a 1-O-alkyl-sn-glycerol + ATP = a 1-O-alkyl-sn-glycero-3-phosphate + ADP + H(+). The catalysed reaction is 1-O-alkyl-2-acyl-sn-glycerol + ATP = 1-O-alkyl-2-acyl-sn-glycero-3-phosphate + ADP + H(+). It carries out the reaction 1,2-di-(9Z-octadecenoyl)-sn-glycerol + ATP = 1,2-di-(9Z-octadecenoyl)-sn-glycero-3-phosphate + ADP + H(+). It catalyses the reaction 1-O-hexadecyl-sn-glycerol + ATP = 1-O-hexadecyl-sn-glycero-3-phosphate + ADP + H(+). The enzyme catalyses 1-O-hexadecyl-2-acetyl-sn-glycerol + ATP = 1-O-hexadecyl-2-acetyl-sn-glycero-3-phosphate + ADP + H(+). The catalysed reaction is 1-octadecanoyl-2-(5Z,8Z,11Z,14Z-eicosatetraenoyl)-sn-glycerol + ATP = 1-octadecanoyl-2-(5Z,8Z,11Z,14Z-eicosatetraenoyl)-sn-glycero-3-phosphate + ADP + H(+). It participates in lipid metabolism; glycerolipid metabolism. Its activity is regulated as follows. Activated by phosphatidylserine. Functionally, diacylglycerol kinase that converts diacylglycerol/DAG into phosphatidic acid/phosphatidate/PA and regulates the respective levels of these two bioactive lipids. Thereby, acts as a central switch between the signaling pathways activated by these second messengers with different cellular targets and opposite effects in numerous biological processes. Within the adrenocorticotropic hormone signaling pathway, produces phosphatidic acid which in turn activates NR5A1 and subsequent steroidogenic gene transcription. Also functions downstream of the nerve growth factor signaling pathway being specifically activated in the nucleus by the growth factor. Through its diacylglycerol activity also regulates synaptic vesicle endocytosis. The polypeptide is Diacylglycerol kinase theta (Rattus norvegicus (Rat)).